The following is a 332-amino-acid chain: NADH-quinone oxidoreductase subunit H (332 aa).

8 helical membrane-spanning segments follow: residues 11 to 31 (TYKI…IVWL), 77 to 97 (VIFI…WAVI), 110 to 130 (VGVL…IMGG), 156 to 176 (IGVI…NDII), 182 to 202 (LWFI…ALAE), 240 to 260 (NILL…LSPI), 268 to 288 (IPGA…FALV), and 307 to 327 (IFLP…FYFN).

The protein belongs to the complex I subunit 1 family. NDH-1 is composed of 14 different subunits. Subunits NuoA, H, J, K, L, M, N constitute the membrane sector of the complex.

It is found in the cell inner membrane. It carries out the reaction a quinone + NADH + 5 H(+)(in) = a quinol + NAD(+) + 4 H(+)(out). Functionally, NDH-1 shuttles electrons from NADH, via FMN and iron-sulfur (Fe-S) centers, to quinones in the respiratory chain. The immediate electron acceptor for the enzyme in this species is believed to be ubiquinone. Couples the redox reaction to proton translocation (for every two electrons transferred, four hydrogen ions are translocated across the cytoplasmic membrane), and thus conserves the redox energy in a proton gradient. This subunit may bind ubiquinone. The polypeptide is NADH-quinone oxidoreductase subunit H (Pelagibacter ubique (strain HTCC1062)).